A 91-amino-acid chain; its full sequence is Small ribosomal subunit protein uS19 (91 aa).

Belongs to the universal ribosomal protein uS19 family.

In terms of biological role, protein S19 forms a complex with S13 that binds strongly to the 16S ribosomal RNA. This chain is Small ribosomal subunit protein uS19, found in Prochlorococcus marinus (strain MIT 9211).